The sequence spans 213 residues: Thiamine-phosphate synthase (213 aa).

Residues 40–44 (QFREK) and Asn-75 contribute to the 4-amino-2-methyl-5-(diphosphooxymethyl)pyrimidine site. Residues Asp-76 and Asp-95 each coordinate Mg(2+). 4-amino-2-methyl-5-(diphosphooxymethyl)pyrimidine is bound at residue Ser-113. 139–141 (TPS) serves as a coordination point for 2-[(2R,5Z)-2-carboxy-4-methylthiazol-5(2H)-ylidene]ethyl phosphate. Lys-142 provides a ligand contact to 4-amino-2-methyl-5-(diphosphooxymethyl)pyrimidine. 2-[(2R,5Z)-2-carboxy-4-methylthiazol-5(2H)-ylidene]ethyl phosphate contacts are provided by residues Gly-171 and 191 to 192 (IS).

This sequence belongs to the thiamine-phosphate synthase family. It depends on Mg(2+) as a cofactor.

The catalysed reaction is 2-[(2R,5Z)-2-carboxy-4-methylthiazol-5(2H)-ylidene]ethyl phosphate + 4-amino-2-methyl-5-(diphosphooxymethyl)pyrimidine + 2 H(+) = thiamine phosphate + CO2 + diphosphate. The enzyme catalyses 2-(2-carboxy-4-methylthiazol-5-yl)ethyl phosphate + 4-amino-2-methyl-5-(diphosphooxymethyl)pyrimidine + 2 H(+) = thiamine phosphate + CO2 + diphosphate. It catalyses the reaction 4-methyl-5-(2-phosphooxyethyl)-thiazole + 4-amino-2-methyl-5-(diphosphooxymethyl)pyrimidine + H(+) = thiamine phosphate + diphosphate. It functions in the pathway cofactor biosynthesis; thiamine diphosphate biosynthesis; thiamine phosphate from 4-amino-2-methyl-5-diphosphomethylpyrimidine and 4-methyl-5-(2-phosphoethyl)-thiazole: step 1/1. Functionally, condenses 4-methyl-5-(beta-hydroxyethyl)thiazole monophosphate (THZ-P) and 2-methyl-4-amino-5-hydroxymethyl pyrimidine pyrophosphate (HMP-PP) to form thiamine monophosphate (TMP). In Staphylococcus aureus (strain MRSA252), this protein is Thiamine-phosphate synthase.